The chain runs to 598 residues: Aspartate--tRNA(Asp/Asn) ligase (598 aa).

Glu-174 is a binding site for L-aspartate. An aspartate region spans residues 198 to 201; it reads QQLK. Arg-220 contributes to the L-aspartate binding site. ATP is bound by residues 220–222 and Gln-229; that span reads RDE. His-458 lines the L-aspartate pocket. Glu-492 lines the ATP pocket. Residue Arg-499 participates in L-aspartate binding. 544–547 is a binding site for ATP; sequence GIDR.

The protein belongs to the class-II aminoacyl-tRNA synthetase family. Type 1 subfamily. Homodimer.

It is found in the cytoplasm. It carries out the reaction tRNA(Asx) + L-aspartate + ATP = L-aspartyl-tRNA(Asx) + AMP + diphosphate. Its function is as follows. Aspartyl-tRNA synthetase with relaxed tRNA specificity since it is able to aspartylate not only its cognate tRNA(Asp) but also tRNA(Asn). Reaction proceeds in two steps: L-aspartate is first activated by ATP to form Asp-AMP and then transferred to the acceptor end of tRNA(Asp/Asn). The sequence is that of Aspartate--tRNA(Asp/Asn) ligase from Dehalococcoides mccartyi (strain ATCC BAA-2100 / JCM 16839 / KCTC 5957 / BAV1).